We begin with the raw amino-acid sequence, 182 residues long: Plasmolipin (182 aa).

Positions 1–20 are disordered; sequence MAEFPSKVSTRTSSPAQGVG. Topologically, residues 1–35 are cytoplasmic; the sequence is MAEFPSKVSTRTSSPAQGVGASVSAMRPDLGFVRS. Positions 7–16 are enriched in polar residues; sequence KVSTRTSSPA. The residue at position 9 (Ser-9) is a Phosphoserine. The MARVEL domain occupies 32-166; it reads FVRSALGVLA…SAFFSFQAWR (135 aa). A helical transmembrane segment spans residues 36–56; it reads ALGVLALLQLVLGLLVWALIA. Residues 57-68 are Extracellular-facing; sequence DTPYHLYPAYGW. Residues 69–89 traverse the membrane as a helical segment; sequence VMFVAVFLWLVTIVFFIIYLF. Topologically, residues 90–99 are cytoplasmic; sequence QLHMKLYMVP. The helical transmembrane segment at 100–120 threads the bilayer; sequence WPLVLLVFFVAATVLYITAFV. Residues 121-141 lie on the Extracellular side of the membrane; that stretch reads ACAAAVDLTSLRGSRPYNQRS. A helical membrane pass occupies residues 142–162; sequence AASFFACLVMIAYGLSAFFSF. Residues 163–182 are Cytoplasmic-facing; the sequence is QAWRGVGSNAATSQMAGGYS.

The protein belongs to the MAL family. In terms of assembly, forms oligomers. Post-translationally, phosphorylated. As to expression, detected to the sciatic nerve, brain and kidney. In the sciatic nerve, found in Schwann cells; in the brain, in developing oligodendrocytes, especially of the corpus callosum, of cortical white matter, in the optic nerve and in the stratum radiatum and stratum oriens of the hippocampus. In kidney, segregated to the apical surface of renal tubular epithelia.

Its subcellular location is the cell membrane. The protein localises to the myelin membrane. The protein resides in the apical cell membrane. In terms of biological role, main component of the myelin sheath that plays an important role in myelin membrane biogenesis and myelination. Plays an essential function in apical endocytosis. Regulates epithelial development through the regulation of apical endocytosis. Part of the intracellular machinery that mediates basolateral-to-apical transport of ICAM-1, an essential adhesion receptor in epithelial cells, from the subapical compartment in hepatic epithelial cells. The polypeptide is Plasmolipin (Pllp) (Rattus norvegicus (Rat)).